Reading from the N-terminus, the 570-residue chain is Serine/threonine-protein kinase flr-4 (570 aa).

The Protein kinase domain occupies 40 to 331; it reads YKYIQDLGKG…KLRIQIKKIL (292 aa). ATP contacts are provided by residues 46–54 and lysine 67; that span reads LGKGRFGTV. The active-site Proton acceptor is the aspartate 172. The disordered stretch occupies residues 338–369; it reads EEETDISHPISNSNTDSSTAISHNHSNDRKVG. Positions 346–361 are enriched in polar residues; that stretch reads PISNSNTDSSTAISHN. The next 3 membrane-spanning stretches (helical) occupy residues 400–420, 425–445, and 471–491; these read IMQIFVASGYYLSRILYFLNI, ICYLLLFLSLGITALGSFLLI, and LIISGILIVLMFALLFSCCMV. Residues 550–570 form a disordered region; the sequence is VRRNHDDYYYDESSGPANEEN.

Belongs to the protein kinase superfamily. Ser/Thr protein kinase family. In terms of tissue distribution, present in the intestinal cells from comma-stage embryos through the adult stage, although the intestinal expression is weaker after the L1 stage. Accumulates at the cell membrane of intestinal cells, especially the lateral membrane intervening the intestinal cells. Also detected in the muscles of the pharyngeal isthmus from the 3-fold embryonic stage, and in a pair of head neurons, which correspond to the AUA neurons, from the late L1 stage (at protein level).

The protein localises to the membrane. The catalysed reaction is L-seryl-[protein] + ATP = O-phospho-L-seryl-[protein] + ADP + H(+). The enzyme catalyses L-threonyl-[protein] + ATP = O-phospho-L-threonyl-[protein] + ADP + H(+). Functionally, probable serine-threonine protein kinase involved in the control of defecation rhythms. Required to increase the length of defecation cycle period. Acts in a cell-functional rather than developmental aspect in the regulation of defecation rhythms. Prevents preferential activation of the p38 MAPK pathway in response to the levels of vitamin B12 in different food types during larval development, thereby regulating the expression of cytoprotective genes, modulating life span and stress tolerance. This is Serine/threonine-protein kinase flr-4 (flr-4) from Caenorhabditis elegans.